The primary structure comprises 259 residues: Global transcriptional regulator CodY (259 aa).

The GAF domain stretch occupies residues 1 to 155 (MSLLSRMRKI…GATVVGMEIL (155 aa)). A DNA-binding region (H-T-H motif) is located at residues 203–222 (ASKIADRVGITRSVIVNALR). Serine 215 bears the Phosphoserine mark.

The protein belongs to the CodY family.

It localises to the cytoplasm. Its function is as follows. DNA-binding global transcriptional regulator which is involved in the adaptive response to starvation and acts by directly or indirectly controlling the expression of numerous genes in response to nutrient availability. During rapid exponential growth, CodY is highly active and represses genes whose products allow adaptation to nutrient depletion. This Halalkalibacterium halodurans (strain ATCC BAA-125 / DSM 18197 / FERM 7344 / JCM 9153 / C-125) (Bacillus halodurans) protein is Global transcriptional regulator CodY.